The sequence spans 263 residues: MNDNFKKQPHHLIYEELLQQGITLGITTRGDGLSDYPKNAFNMARYIDDRPYNITQHQLQLAEEIAFDRKNWVFPIQTHENKVACITKDDIGTNIDTLTDALHGIDAMYTYDSNVLLTMCYADCVPVYFYSTKHHFIALAHAGWRGTYTEIVKEVLKHVNFDLKDLHVVIGPSTSSSYEINDDIKNKFETLPIDSANYIETRGRDRHGIDLKKANAALLIYYGVPKENIYTTAYATSEHLELFFSYRLEKGQTGRMLAFIGQQ.

Zn(2+)-binding residues include His79, Cys124, and His141.

This sequence belongs to the purine nucleoside phosphorylase YfiH/LACC1 family. As to quaternary structure, homodimer. Requires Cu(2+) as cofactor. Zn(2+) is required as a cofactor.

The enzyme catalyses adenosine + phosphate = alpha-D-ribose 1-phosphate + adenine. It carries out the reaction S-methyl-5'-thioadenosine + phosphate = 5-(methylsulfanyl)-alpha-D-ribose 1-phosphate + adenine. It catalyses the reaction inosine + phosphate = alpha-D-ribose 1-phosphate + hypoxanthine. The catalysed reaction is adenosine + H2O + H(+) = inosine + NH4(+). Functionally, purine nucleoside enzyme that catalyzes the phosphorolysis of adenosine and inosine nucleosides, yielding D-ribose 1-phosphate and the respective free bases, adenine and hypoxanthine. Also catalyzes the phosphorolysis of S-methyl-5'-thioadenosine into adenine and S-methyl-5-thio-alpha-D-ribose 1-phosphate. Also has adenosine deaminase activity. The chain is Purine nucleoside phosphorylase SACOL1200 from Staphylococcus aureus (strain COL).